The sequence spans 498 residues: Acetylcholine receptor subunit alpha-type acr-16 (498 aa).

Residues 1 to 19 (MSVCTLLISCAILAAPTLG) form the signal peptide. Residues 20–230 (SLQERRLYED…FYLHMRRRTL (211 aa)) are Extracellular-facing. N-linked (GlcNAc...) asparagine glycosylation is found at asparagine 43 and asparagine 93. Intrachain disulfides connect cysteine 147-cysteine 161 and cysteine 211-cysteine 212. Helical transmembrane passes span 231–252 (YYGFNLIMPCILTTLMTLLGFT), 261–279 (ITLQITVLLSICFFLSIVS), and 295–314 (FFTCCMIVVTASTVFTVYVL). The Cytoplasmic portion of the chain corresponds to 315 to 472 (NLHYRTPETH…WKFAAMVVDR (158 aa)). A helical transmembrane segment spans residues 473 to 493 (LCLYVFTIFIIVSTIGIFWSA).

The protein belongs to the ligand-gated ion channel (TC 1.A.9) family. Acetylcholine receptor (TC 1.A.9.1) subfamily. Expressed in the body wall muscle.

The protein localises to the postsynaptic cell membrane. Its subcellular location is the cell membrane. Its function is as follows. After binding acetylcholine, the AChR responds by an extensive change in conformation that affects all subunits and leads to opening of an ion-conducting channel across the plasma membrane. A subunit of the levamisole-insensitive nicotinic receptor. The sequence is that of Acetylcholine receptor subunit alpha-type acr-16 (acr-16) from Caenorhabditis elegans.